We begin with the raw amino-acid sequence, 435 residues long: Fez family zinc finger protein 2 (435 aa).

An Engrailed homology 1 repressor motif is present at residues 27 to 42; the sequence is SLAFSIERIMAKTSEP. 6 consecutive C2H2-type zinc fingers follow at residues 254-276, 282-304, 310-332, 338-360, 366-388, and 394-417; these read FTCE…MPVH, FVCK…KIIH, HKCN…IRIH, FVCE…KLTH, YKCT…MHTH, and FTCG…RKLH.

It belongs to the krueppel C2H2-type zinc-finger protein family.

The protein localises to the nucleus. Transcription repressor. Component of the regulatory cascade that controls the development of dopaminergic (DA) and serotonergic (5HT) neurons. This is Fez family zinc finger protein 2 (fezf2) from Xenopus tropicalis (Western clawed frog).